Here is a 258-residue protein sequence, read N- to C-terminus: Imidazole glycerol phosphate synthase subunit HisF (258 aa).

Residues aspartate 12 and aspartate 131 contribute to the active site.

The protein belongs to the HisA/HisF family. As to quaternary structure, heterodimer of HisH and HisF.

The protein resides in the cytoplasm. The enzyme catalyses 5-[(5-phospho-1-deoxy-D-ribulos-1-ylimino)methylamino]-1-(5-phospho-beta-D-ribosyl)imidazole-4-carboxamide + L-glutamine = D-erythro-1-(imidazol-4-yl)glycerol 3-phosphate + 5-amino-1-(5-phospho-beta-D-ribosyl)imidazole-4-carboxamide + L-glutamate + H(+). The protein operates within amino-acid biosynthesis; L-histidine biosynthesis; L-histidine from 5-phospho-alpha-D-ribose 1-diphosphate: step 5/9. Its function is as follows. IGPS catalyzes the conversion of PRFAR and glutamine to IGP, AICAR and glutamate. The HisF subunit catalyzes the cyclization activity that produces IGP and AICAR from PRFAR using the ammonia provided by the HisH subunit. This Pseudarthrobacter chlorophenolicus (strain ATCC 700700 / DSM 12829 / CIP 107037 / JCM 12360 / KCTC 9906 / NCIMB 13794 / A6) (Arthrobacter chlorophenolicus) protein is Imidazole glycerol phosphate synthase subunit HisF.